Here is a 290-residue protein sequence, read N- to C-terminus: Fat storage-inducing transmembrane protein 1 (290 aa).

A run of 5 helical transmembrane segments spans residues 1 to 21 (MFLN…LGNT), 26 to 46 (HFHL…LWVS), 65 to 85 (SGWG…SFSV), 173 to 193 (LLLC…GPYL), and 205 to 225 (ILFL…LCLL).

It belongs to the FIT family. FIT1 subfamily.

It localises to the endoplasmic reticulum membrane. May play an important role in the formation of lipid droplets (LDs) which are storage organelles at the center of lipid and energy homeostasis. May directly bind to diacylglycerol (DAGs) and triacylglycerol. This chain is Fat storage-inducing transmembrane protein 1 (fitm1l), found in Danio rerio (Zebrafish).